The following is a 246-amino-acid chain: 1-(5-phosphoribosyl)-5-[(5-phosphoribosylamino)methylideneamino] imidazole-4-carboxamide isomerase (246 aa).

D10 functions as the Proton acceptor in the catalytic mechanism.

It belongs to the HisA/HisF family.

The protein localises to the cytoplasm. The enzyme catalyses 1-(5-phospho-beta-D-ribosyl)-5-[(5-phospho-beta-D-ribosylamino)methylideneamino]imidazole-4-carboxamide = 5-[(5-phospho-1-deoxy-D-ribulos-1-ylimino)methylamino]-1-(5-phospho-beta-D-ribosyl)imidazole-4-carboxamide. Its pathway is amino-acid biosynthesis; L-histidine biosynthesis; L-histidine from 5-phospho-alpha-D-ribose 1-diphosphate: step 4/9. This Corynebacterium efficiens (strain DSM 44549 / YS-314 / AJ 12310 / JCM 11189 / NBRC 100395) protein is 1-(5-phosphoribosyl)-5-[(5-phosphoribosylamino)methylideneamino] imidazole-4-carboxamide isomerase.